An 89-amino-acid polypeptide reads, in one-letter code: UPF0297 protein SUB1776 (89 aa).

The protein belongs to the UPF0297 family.

The polypeptide is UPF0297 protein SUB1776 (Streptococcus uberis (strain ATCC BAA-854 / 0140J)).